We begin with the raw amino-acid sequence, 135 residues long: Cytochrome b5, seed isoform (135 aa).

Positions 5–81 (SKVFTLAEVS…LDEYYVGDID (77 aa)) constitute a Cytochrome b5 heme-binding domain. Residues His40 and His64 each contribute to the heme site. The chain crosses the membrane as a helical span at residues 107–127 (FIVKLLQFLVPLIILGVAFGV).

It belongs to the cytochrome b5 family. Specifically expressed in developing seeds.

Its subcellular location is the endoplasmic reticulum membrane. The protein localises to the microsome membrane. Functionally, cytochrome b5 is a membrane bound hemoprotein which function as an electron carrier for several membrane bound oxygenases. May play a key role in the modification by desaturation of fatty acids in the endoplasmic reticulum, which in the developing seed is utilized for membrane synthesis and in the developmentally regulated production of large amounts of storage lipids. The chain is Cytochrome b5, seed isoform from Nicotiana tabacum (Common tobacco).